The primary structure comprises 151 residues: Ribosome maturation factor RimP (151 aa).

It belongs to the RimP family.

Its subcellular location is the cytoplasm. In terms of biological role, required for maturation of 30S ribosomal subunits. The sequence is that of Ribosome maturation factor RimP from Shewanella sp. (strain MR-4).